Consider the following 541-residue polypeptide: Membrane protein insertase YidC (541 aa).

The chain crosses the membrane as a helical span at residues 6–26; that stretch reads SLLVLALIFISFLVYQQWQLD. The disordered stretch occupies residues 34–56; that stretch reads EQTTSITATSDVPASSPSNSQAI. The next 4 membrane-spanning stretches (helical) occupy residues 337–357, 416–436, 454–474, and 495–515; these read FWLL…IICV, LGGC…YWTF, LSAQ…MFLL, and PLVF…YWLV.

This sequence belongs to the OXA1/ALB3/YidC family. Type 1 subfamily. In terms of assembly, interacts with the Sec translocase complex via SecD. Specifically interacts with transmembrane segments of nascent integral membrane proteins during membrane integration.

The protein localises to the cell inner membrane. In terms of biological role, required for the insertion and/or proper folding and/or complex formation of integral membrane proteins into the membrane. Involved in integration of membrane proteins that insert both dependently and independently of the Sec translocase complex, as well as at least some lipoproteins. Aids folding of multispanning membrane proteins. This Haemophilus influenzae (strain 86-028NP) protein is Membrane protein insertase YidC.